We begin with the raw amino-acid sequence, 414 residues long: MSELLEKAERLKTASQTLAMLSAEEKNEALEQIAQTLDRERAFILQENEKDMAQGREQGLSPALLDRLQLTNERLDQIIDGVRQVASLPDPVGEIIAEWTRPNGLRIQTVRVPLGVIGMVYEARPNVTVDAASLCLKTGNAVLLRGSTSALHSNKALVAVMKEALRTTAIPETAIELLEDTSRETAQRMFRLNNYLDVLIPRGGAGLIRSVVENATVPVLETGVGNCHIFVDESAERQMAIEIVLNAKLQRPSVCNAVETVLIHERWPYAADLLETLHARGVELRGDQRLASAYPFISEATEDDWYTEYLAPILAVKLVADVDEAIGHIRRYGTKHSEAIITENEVNVRRFFQAVDAAVLYHNASTRFTDGEQFGYGAEIGISTQKLHARGPMGLVAITTTKSLVYGTGQIRTV.

The protein belongs to the gamma-glutamyl phosphate reductase family.

It is found in the cytoplasm. It catalyses the reaction L-glutamate 5-semialdehyde + phosphate + NADP(+) = L-glutamyl 5-phosphate + NADPH + H(+). Its pathway is amino-acid biosynthesis; L-proline biosynthesis; L-glutamate 5-semialdehyde from L-glutamate: step 2/2. Functionally, catalyzes the NADPH-dependent reduction of L-glutamate 5-phosphate into L-glutamate 5-semialdehyde and phosphate. The product spontaneously undergoes cyclization to form 1-pyrroline-5-carboxylate. The protein is Gamma-glutamyl phosphate reductase of Geobacillus kaustophilus (strain HTA426).